The sequence spans 219 residues: Ribose-5-phosphate isomerase A (219 aa).

Substrate-binding positions include 28-31 (TGST), 81-84 (DGAD), and 94-97 (KGGG). The active-site Proton acceptor is Glu-103. Lys-121 provides a ligand contact to substrate.

This sequence belongs to the ribose 5-phosphate isomerase family. Homodimer.

The catalysed reaction is aldehydo-D-ribose 5-phosphate = D-ribulose 5-phosphate. It functions in the pathway carbohydrate degradation; pentose phosphate pathway; D-ribose 5-phosphate from D-ribulose 5-phosphate (non-oxidative stage): step 1/1. Catalyzes the reversible conversion of ribose-5-phosphate to ribulose 5-phosphate. The chain is Ribose-5-phosphate isomerase A from Edwardsiella ictaluri (strain 93-146).